A 143-amino-acid polypeptide reads, in one-letter code: Cytochrome c-type biogenesis protein CcmE (143 aa).

At 1 to 8 (MTPVRRRK) the chain is on the cytoplasmic side. The helical; Signal-anchor for type II membrane protein transmembrane segment at 9–29 (LFILLFALSVLSAAAALVLYA) threads the bilayer. The Periplasmic segment spans residues 30–143 (LRQNISLFYT…KSALADKVKQ (114 aa)). Heme is bound by residues histidine 124 and tyrosine 128.

This sequence belongs to the CcmE/CycJ family.

The protein localises to the cell inner membrane. In terms of biological role, heme chaperone required for the biogenesis of c-type cytochromes. Transiently binds heme delivered by CcmC and transfers the heme to apo-cytochromes in a process facilitated by CcmF and CcmH. The sequence is that of Cytochrome c-type biogenesis protein CcmE from Legionella pneumophila (strain Lens).